The primary structure comprises 101 residues: Phosphoribosyl-AMP cyclohydrolase (101 aa).

Asp71 is a Mg(2+) binding site. Position 72 (Cys72) interacts with Zn(2+). Mg(2+)-binding residues include Asp73 and Asp75. Zn(2+)-binding residues include Cys88 and Cys95.

The protein belongs to the PRA-CH family. In terms of assembly, homodimer. Requires Mg(2+) as cofactor. It depends on Zn(2+) as a cofactor.

It is found in the cytoplasm. It carries out the reaction 1-(5-phospho-beta-D-ribosyl)-5'-AMP + H2O = 1-(5-phospho-beta-D-ribosyl)-5-[(5-phospho-beta-D-ribosylamino)methylideneamino]imidazole-4-carboxamide. Its pathway is amino-acid biosynthesis; L-histidine biosynthesis; L-histidine from 5-phospho-alpha-D-ribose 1-diphosphate: step 3/9. In terms of biological role, catalyzes the hydrolysis of the adenine ring of phosphoribosyl-AMP. In Bacillus cereus (strain AH820), this protein is Phosphoribosyl-AMP cyclohydrolase.